The following is a 513-amino-acid chain: Cytochrome P450 monooxygenase sthF (513 aa).

The next 2 membrane-spanning stretches (helical) occupy residues 13 to 33 and 212 to 232; these read FPSL…YIFI and MLHP…IILL. Residue cysteine 452 participates in heme binding.

The protein belongs to the cytochrome P450 family. The cofactor is heme.

It localises to the membrane. It carries out the reaction dehydroprobetaenone I + NADPH + O2 + H(+) = epoxybetaenone + NADP(+) + H2O. The enzyme catalyses dehydroprobetaenone I + 3 NADPH + 3 O2 + 3 H(+) = betaenone C + 3 NADP(+) + 3 H2O. The catalysed reaction is probetaenone I + 3 NADPH + 3 O2 + 3 H(+) = betaenone B + 3 NADP(+) + 3 H2O. The protein operates within mycotoxin biosynthesis. Its function is as follows. Cytochrome P450 monooxygenase; part of the gene cluster that mediates the biosynthesis of the phytotoxin stemphyloxin II. The first step of the pathway is the synthesis of dehydroprobetaenone I by the polyketide synthase sthA and the enoyl reductase sthE via condensation of one acetyl-CoA starter unit with 7 malonyl-CoA units and 5 methylations. The C-terminal reductase (R) domain of sthA catalyzes the reductive release of the polyketide chain. Because sthA lacks a designated enoylreductase (ER) domain, the required activity is provided the enoyl reductase sthE. The short-chain dehydrogenase/reductase sthC then catalyzes reduction of dehydroprobetaenone I to probetaenone I. The cytochrome P450 monooxygenase sthF catalyzes successive epoxidation, oxidation (resulting from epoxide opening) and hydroxylation to install a tertiary alcohol in the decaline ring to yield betaenone C from dehydroprobetaenone I and betaenone B from probetaenone I. The FAD-linked oxidoreductase sthB is responsible for the conversion of betaenone C to betaenone A via an intramolecular aldol reaction between C-1 and C-17 to form the bridged tricyclic system in betaenone A. Finally, the cytochrome P450 monooxygenase sthD catalyzes the hydroxylation of C-15 to afford the final metabolite stemphyloxin II. The chain is Cytochrome P450 monooxygenase sthF from Phaeosphaeria nodorum (strain SN15 / ATCC MYA-4574 / FGSC 10173) (Glume blotch fungus).